The primary structure comprises 357 residues: TPISEDCLYLNVWQPSPAPTGATVLVWIYGGGFFSGTSSLDVYDGRYLARMEDVVVVSMNYRLGALGFLYTGSEAAPGNAGLLDQHLALQWVQQNIQSFGGDPGKVTIFGESAGAASVNFHMLSPMSRDLFQRAMMHSASALAPWAVTPSEQARQRSKALAIDIGCSADEEDMDVLVACLREVSAQTILDHEWNVVDLSDAHFLADIPFPPVKDGRFITEDPAEMYAAGNFKDIDILVGFVKDEGNFWLVYGVPGFDKDTDSIIDRETFVGDIVFCHPRLNDITVERTAFEYTDWLHMDQDTMYRDALDSVFGDPFFVCPTMAVGKAHVNHGRTAYVYEFAQVASNLAWPHWMGAMH.

Serine 112 (acyl-ester intermediate) is an active-site residue. A disulfide bridge connects residues cysteine 166 and cysteine 179. Residues glutamate 244 and histidine 357 each act as charge relay system in the active site.

This sequence belongs to the type-B carboxylesterase/lipase family.

The enzyme catalyses an acylcholine + H2O = a carboxylate + choline + H(+). This chain is Cholinesterase 1 (CHE1), found in Branchiostoma lanceolatum (Common lancelet).